Here is a 904-residue protein sequence, read N- to C-terminus: NADH-quinone oxidoreductase subunit G (904 aa).

The 83-residue stretch at 1–83 (MATIHVDGKA…GTWISIDDEE (83 aa)) folds into the 2Fe-2S ferredoxin-type domain. Residues C34, C45, C48, and C67 each contribute to the [2Fe-2S] cluster site. Positions 83–122 (ESKAFRASVVEWLMTNHPHDCPVCEEGGHCHLQDMTVMTG) constitute a 4Fe-4S His(Cys)3-ligated-type domain. The [4Fe-4S] cluster site is built by H99, C103, C106, C112, C151, C154, C157, C201, C228, C231, C235, and C263. A 4Fe-4S Mo/W bis-MGD-type domain is found at 221-277 (MQFAPSICHGCSSGCNISPGERYGELRRIENRFNGSVNQYFLCDRGRFGYGYVNRKD).

The protein belongs to the complex I 75 kDa subunit family. As to quaternary structure, composed of 13 different subunits. Subunits NuoCD, E, F, and G constitute the peripheral sector of the complex. The cofactor is [2Fe-2S] cluster. [4Fe-4S] cluster serves as cofactor.

It catalyses the reaction a quinone + NADH + 5 H(+)(in) = a quinol + NAD(+) + 4 H(+)(out). In terms of biological role, NDH-1 shuttles electrons from NADH, via FMN and iron-sulfur (Fe-S) centers, to quinones in the respiratory chain. The immediate electron acceptor for the enzyme in this species is believed to be ubiquinone. Couples the redox reaction to proton translocation (for every two electrons transferred, four hydrogen ions are translocated across the cytoplasmic membrane), and thus conserves the redox energy in a proton gradient. The chain is NADH-quinone oxidoreductase subunit G (nuoG) from Pseudomonas putida (strain ATCC 47054 / DSM 6125 / CFBP 8728 / NCIMB 11950 / KT2440).